A 116-amino-acid polypeptide reads, in one-letter code: Protein Rev (116 aa).

Serine 5 carries the post-translational modification Phosphoserine; by host CK2. Positions leucine 18–asparagine 26 are homomultimerization. The disordered stretch occupies residues tyrosine 23–glutamine 49. Residues threonine 34–arginine 50 carry the Nuclear localization signal and RNA-binding (RRE) motif. Over residues glutamine 36–glutamine 49 the composition is skewed to basic residues. The short motif at leucine 73–asparagine 84 is the Nuclear export signal and binding to XPO1 element. Residues serine 86–glutamate 116 form a disordered region. A phosphoserine; by host mark is found at serine 92 and serine 99.

The protein belongs to the HIV-1 REV protein family. Homomultimer; when bound to the RRE. Multimeric assembly is essential for activity and may involve XPO1. Binds to human KPNB1, XPO1, TNPO1, RANBP5 and IPO7. Interacts with the viral Integrase. Interacts with human KHDRBS1. Interacts with human NAP1; this interaction decreases Rev multimerization and stimulates its activity. Interacts with human DEAD-box helicases DDX3 and DDX24; these interactions may serve for viral RNA export to the cytoplasm and packaging, respectively. Interacts with human PSIP1; this interaction may inhibit HIV-1 DNA integration by promoting dissociation of the Integrase-LEDGF/p75 complex. Asymmetrically arginine dimethylated at one site by host PRMT6. Methylation impairs the RNA-binding activity and export of viral RNA from the nucleus to the cytoplasm. Post-translationally, phosphorylated by protein kinase CK2. Presence of, and maybe binding to the N-terminus of the regulatory beta subunit of CK2 is necessary for CK2-mediated Rev's phosphorylation.

The protein resides in the host nucleus. It is found in the host nucleolus. It localises to the host cytoplasm. In terms of biological role, escorts unspliced or incompletely spliced viral pre-mRNAs (late transcripts) out of the nucleus of infected cells. These pre-mRNAs carry a recognition sequence called Rev responsive element (RRE) located in the env gene, that is not present in fully spliced viral mRNAs (early transcripts). This function is essential since most viral proteins are translated from unspliced or partially spliced pre-mRNAs which cannot exit the nucleus by the pathway used by fully processed cellular mRNAs. Rev itself is translated from a fully spliced mRNA that readily exits the nucleus. Rev's nuclear localization signal (NLS) binds directly to KPNB1/Importin beta-1 without previous binding to KPNA1/Importin alpha-1. KPNB1 binds to the GDP bound form of RAN (Ran-GDP) and targets Rev to the nucleus. In the nucleus, the conversion from Ran-GDP to Ran-GTP dissociates Rev from KPNB1 and allows Rev's binding to the RRE in viral pre-mRNAs. Rev multimerization on the RRE via cooperative assembly exposes its nuclear export signal (NES) to the surface. Rev can then form a complex with XPO1/CRM1 and Ran-GTP, leading to nuclear export of the complex. Conversion from Ran-GTP to Ran-GDP mediates dissociation of the Rev/RRE/XPO1/RAN complex, so that Rev can return to the nucleus for a subsequent round of export. Beside KPNB1, also seems to interact with TNPO1/Transportin-1, RANBP5/IPO5 and IPO7/RANBP7 for nuclear import. The nucleoporin-like HRB/RIP is an essential cofactor that probably indirectly interacts with Rev to release HIV RNAs from the perinuclear region to the cytoplasm. The protein is Protein Rev of Homo sapiens (Human).